A 146-amino-acid chain; its full sequence is Leghemoglobin Lb120-34 (146 aa).

In terms of domain architecture, Globin spans 2 to 146; it reads GFTEKQEALV…LASAIKKAMN (145 aa). Nitrated tyrosine is present on residues Y24 and Y29. A heme b-binding site is contributed by S44. Phosphoserine is present on S44. H61 contributes to the O2 binding site. The heme b site is built by K64, H93, and K96. A Nitrated tyrosine modification is found at Y134.

Belongs to the plant globin family. Monomer. Post-translationally, nitrated in effective nodules and particularly in hypoxic conditions; this mechanism may play a protective role in the symbiosis by buffering toxic peroxynitrite NO(2)(-). Nitration level decrease during nodule senescence. Phosphorylation at Ser-44 disrupts the molecular environment of its porphyrin ring oxygen binding pocket, thus leading to a reduced oxygen consumption and to the delivery of oxygen O(2) to symbiosomes. As to expression, root nodules.

Its subcellular location is the cytoplasm. It is found in the cytosol. It localises to the nucleus. In terms of biological role, leghemoglobin that reversibly binds oxygen O(2) through a pentacoordinated heme iron. In root nodules, facilitates the diffusion of oxygen to the bacteroids while preventing the bacterial nitrogenase from being inactivated by buffering dioxygen, nitric oxide and carbon monoxide, and promoting the formation of reactive oxygen species (ROS, e.g. H(2)O(2)). This role is essential for symbiotic nitrogen fixation (SNF). This Pisum sativum (Garden pea) protein is Leghemoglobin Lb120-34.